The primary structure comprises 164 residues: FMN reductase (NADH) RutF (164 aa).

The protein belongs to the non-flavoprotein flavin reductase family. RutF subfamily.

It catalyses the reaction FMNH2 + NAD(+) = FMN + NADH + 2 H(+). In terms of biological role, catalyzes the reduction of FMN to FMNH2 which is used to reduce pyrimidine by RutA via the Rut pathway. This Escherichia coli O150:H5 (strain SE15) protein is FMN reductase (NADH) RutF.